The sequence spans 199 residues: Pyridoxine/pyridoxamine 5'-phosphate oxidase (199 aa).

FMN contacts are provided by residues 44–49 (RTVLLK), 59–60 (YT), Lys66, and Gln91. Lys49 serves as a coordination point for substrate. Substrate-binding residues include Tyr109, Arg113, and Ser117. FMN contacts are provided by residues 126-127 (QS) and Trp171. 177 to 179 (RLH) lines the substrate pocket. An FMN-binding site is contributed by Arg181.

This sequence belongs to the pyridoxamine 5'-phosphate oxidase family. Homodimer. It depends on FMN as a cofactor.

It catalyses the reaction pyridoxamine 5'-phosphate + O2 + H2O = pyridoxal 5'-phosphate + H2O2 + NH4(+). The enzyme catalyses pyridoxine 5'-phosphate + O2 = pyridoxal 5'-phosphate + H2O2. It functions in the pathway cofactor metabolism; pyridoxal 5'-phosphate salvage; pyridoxal 5'-phosphate from pyridoxamine 5'-phosphate: step 1/1. Its pathway is cofactor metabolism; pyridoxal 5'-phosphate salvage; pyridoxal 5'-phosphate from pyridoxine 5'-phosphate: step 1/1. Catalyzes the oxidation of either pyridoxine 5'-phosphate (PNP) or pyridoxamine 5'-phosphate (PMP) into pyridoxal 5'-phosphate (PLP). The chain is Pyridoxine/pyridoxamine 5'-phosphate oxidase from Xanthomonas euvesicatoria pv. vesicatoria (strain 85-10) (Xanthomonas campestris pv. vesicatoria).